The following is a 272-amino-acid chain: MSTFVAKDGTQIYFKDWGSGKPVLFSHGWLLDADMWEYQMEYLSSRGYRTIAFDRRGFGRSDQPWTGNDYDTFADDIAQLIEHLDLKEVTLVGFSMGGGDVARYIARHGSARVAGLVLLGAVTPLFGQKPDYPQGVPLDVFARFKTELLKDRAQFISDFNAPFYGINKGQVVSQGVQTQTLQIALLASLKATVDCVTAFAETDFRPDMAKIDVPTLVIHGDGDQIVPFETTGKVAAELIKGAELKVYKDAPHGFAVTHAQQLNEDLLAFLKR.

Residues 21–253 enclose the AB hydrolase-1 domain; that stretch reads KPVLFSHGWL…LKVYKDAPHG (233 aa). An acetate-binding site is contributed by W29. S95 is an active-site residue. Residue M96 coordinates acetate. Residues D223 and H252 contribute to the active site.

This sequence belongs to the AB hydrolase superfamily. Bacterial non-heme haloperoxidase / perhydrolase family. In terms of assembly, dimer of trimers.

The catalysed reaction is a phenyl acetate + H2O = a phenol + acetate + H(+). It catalyses the reaction peracetic acid + H2O = acetate + H2O2 + H(+). The enzyme catalyses a percarboxylic acid + H2O = a carboxylate + H2O2 + H(+). Hydrolyzes phenolic esters, such as phenyl acetate, nitrophenyl acetate and naphtyl acetate. Can act on a wide range of esters, but reaction rate and enantioselectivity differ significantly depending on the substrate. Shows a preference for esters with small acyl groups. Also shows low perhydrolase activity, and catalyzes the reversible formation of peroxycarboxylic acids from carboxylic acids and hydrogen peroxide. In vitro, enzyme-generated peracetic acid oxidizes bromide ion to bromonium, which reacts with monochlorodimedone to form bromochlorodimedone. The chain is Arylesterase from Pseudomonas fluorescens.